Consider the following 629-residue polypeptide: tRNA uridine 5-carboxymethylaminomethyl modification enzyme MnmG (629 aa).

FAD contacts are provided by residues 14-19 (GAGHAG), Val-126, and Ser-181. Position 273–287 (273–287 (GPRYCPSIEDKVVRF)) interacts with NAD(+). Gln-370 lines the FAD pocket.

It belongs to the MnmG family. Homodimer. Heterotetramer of two MnmE and two MnmG subunits. FAD serves as cofactor.

It localises to the cytoplasm. NAD-binding protein involved in the addition of a carboxymethylaminomethyl (cmnm) group at the wobble position (U34) of certain tRNAs, forming tRNA-cmnm(5)s(2)U34. The chain is tRNA uridine 5-carboxymethylaminomethyl modification enzyme MnmG from Bacillus cereus (strain ZK / E33L).